The primary structure comprises 407 residues: MDNVLPVDSDLFPNISTNTSEPNQFVQPAWQIVLWAAAYTVIVVTSVVGNVVVMWIILAHKRMRTVTNYFLVNLAFAEASMAAFNTVVNFTYAVHNEWYYGLFYCKFHNFFPIAAVFASIYSMTAVAFDRYMAIIHPLQPRLSATATKVVICVIWVLALLLAFPQGYYSTTETMPGRVVCMIEWPSHPDKIYEKVYHICVTVLIYFLPLLVIGYAYTVVGITLWASEIPGDSSDRYHEQVSAKRKVVKMMIVVVCTFAICWLPFHIFFLLPYINPDLYLKKFIQQVYLAIMWLAMSSTMYNPIIYCCLNDRFRLGFKHAFRCCPFISAADYEGLEMKSTRYFQTQGSVYKVSRLETTISTVVGAHEEDPEEGPKATPSSLDLTSNGSSRSNSKTVTESSSFYSNMLS.

Residues 1–31 lie on the Extracellular side of the membrane; sequence MDNVLPVDSDLFPNISTNTSEPNQFVQPAWQ. N-linked (GlcNAc...) asparagine glycans are attached at residues asparagine 14 and asparagine 18. The helical transmembrane segment at 32 to 54 threads the bilayer; the sequence is IVLWAAAYTVIVVTSVVGNVVVM. The Cytoplasmic segment spans residues 55-64; the sequence is WIILAHKRMR. A helical membrane pass occupies residues 65-86; it reads TVTNYFLVNLAFAEASMAAFNT. Residues 87 to 106 lie on the Extracellular side of the membrane; it reads VVNFTYAVHNEWYYGLFYCK. A disulfide bond links cysteine 105 and cysteine 180. A helical membrane pass occupies residues 107–128; sequence FHNFFPIAAVFASIYSMTAVAF. Residues 129-148 are Cytoplasmic-facing; that stretch reads DRYMAIIHPLQPRLSATATK. A helical membrane pass occupies residues 149–169; the sequence is VVICVIWVLALLLAFPQGYYS. Residues 170–194 lie on the Extracellular side of the membrane; the sequence is TTETMPGRVVCMIEWPSHPDKIYEK. Residues 195-219 traverse the membrane as a helical segment; it reads VYHICVTVLIYFLPLLVIGYAYTVV. Residues 220–248 lie on the Cytoplasmic side of the membrane; sequence GITLWASEIPGDSSDRYHEQVSAKRKVVK. A helical membrane pass occupies residues 249–270; the sequence is MMIVVVCTFAICWLPFHIFFLL. Residues 271–283 are Extracellular-facing; that stretch reads PYINPDLYLKKFI. Residues 284 to 308 traverse the membrane as a helical segment; that stretch reads QQVYLAIMWLAMSSTMYNPIIYCCL. The Cytoplasmic portion of the chain corresponds to 309–407; sequence NDRFRLGFKH…SSSFYSNMLS (99 aa). Cysteine 322 carries the S-palmitoyl cysteine lipid modification. The segment at 363 to 407 is disordered; the sequence is GAHEEDPEEGPKATPSSLDLTSNGSSRSNSKTVTESSSFYSNMLS. Positions 376–407 are enriched in polar residues; it reads TPSSLDLTSNGSSRSNSKTVTESSSFYSNMLS.

It belongs to the G-protein coupled receptor 1 family. Interacts with ARRB1.

It localises to the cell membrane. In terms of biological role, this is a receptor for the tachykinin neuropeptide substance P. It is probably associated with G proteins that activate a phosphatidylinositol-calcium second messenger system. The rank order of affinity of this receptor to tachykinins is: substance P &gt; substance K &gt; neuromedin-K. This is Substance-P receptor (TACR1) from Cavia porcellus (Guinea pig).